Reading from the N-terminus, the 129-residue chain is MEKYHSNSRFAPFRDAPFALRGALGSSGSSFSSIDSLRRSSTLEQARGYTSRPLGAVRPKMLPSGCRPLHTSHPLSAPVANRPLSPHLPLKKPQLSATFSISHRIFGAALGAAIISIPLATKFSLMFDV.

The N-terminal 58 residues, 1–58 (MEKYHSNSRFAPFRDAPFALRGALGSSGSSFSSIDSLRRSSTLEQARGYTSRPLGAVR), are a transit peptide targeting the mitochondrion. The segment covering 25–35 (GSSGSSFSSID) has biased composition (low complexity). Residues 25 to 80 (GSSGSSFSSIDSLRRSSTLEQARGYTSRPLGAVRPKMLPSGCRPLHTSHPLSAPVA) are disordered. Residue His87 participates in heme binding. Residues 105 to 127 (IFGAALGAAIISIPLATKFSLMF) form a helical membrane-spanning segment.

In terms of assembly, component of complex II composed of eight subunits in plants: four classical SDH subunits SDH1, SDH2, SDH3 and SDH4 (a flavoprotein (FP), an iron-sulfur protein (IP), and a cytochrome b composed of a large and a small subunit.), as well as four subunits unknown in mitochondria from bacteria and heterotrophic eukaryotes. Heme serves as cofactor.

The protein resides in the mitochondrion inner membrane. Its pathway is carbohydrate metabolism; tricarboxylic acid cycle. Functionally, membrane-anchoring subunit of succinate dehydrogenase (SDH). In Oryza sativa subsp. japonica (Rice), this protein is Succinate dehydrogenase subunit 3-1, mitochondrial.